Reading from the N-terminus, the 39-residue chain is MQRNPNPNNLPVELNRTSLYLGLLLVFVTGVLFSSYFFN.

The chain crosses the membrane as a helical span at residues 18-38; that stretch reads SLYLGLLLVFVTGVLFSSYFF.

It belongs to the PsbL family. PSII is composed of 1 copy each of membrane proteins PsbA, PsbB, PsbC, PsbD, PsbE, PsbF, PsbH, PsbI, PsbJ, PsbK, PsbL, PsbM, PsbT, PsbX, PsbY, PsbZ, Psb30/Ycf12, at least 3 peripheral proteins of the oxygen-evolving complex and a large number of cofactors. It forms dimeric complexes.

The protein localises to the plastid. It is found in the organellar chromatophore thylakoid membrane. One of the components of the core complex of photosystem II (PSII). PSII is a light-driven water:plastoquinone oxidoreductase that uses light energy to abstract electrons from H(2)O, generating O(2) and a proton gradient subsequently used for ATP formation. It consists of a core antenna complex that captures photons, and an electron transfer chain that converts photonic excitation into a charge separation. This subunit is found at the monomer-monomer interface and is required for correct PSII assembly and/or dimerization. In Paulinella chromatophora, this protein is Photosystem II reaction center protein L.